The primary structure comprises 219 residues: C-type lectin domain family 4 member E (219 aa).

Topologically, residues methionine 1–serine 19 are cytoplasmic. The helical; Signal-anchor for type II membrane protein transmembrane segment at glutamine 20–threonine 40 threads the bilayer. Residues arginine 41–leucine 219 lie on the Extracellular side of the membrane. The N-linked (GlcNAc...) asparagine glycan is linked to asparagine 62. A disulfide bridge connects residues cysteine 80 and cysteine 91. One can recognise a C-type lectin domain in the interval phenylalanine 87–glutamate 206. An N-linked (GlcNAc...) asparagine glycan is attached at asparagine 107. 2 cysteine pairs are disulfide-bonded: cysteine 108–cysteine 205 and cysteine 179–cysteine 197. Ca(2+) contacts are provided by valine 117, asparagine 119, glutamate 123, glutamate 169, asparagine 171, asparagine 193, aspartate 194, and glutamate 206. The Confers specificity for glucose/mannose-type carbohydrates signature appears at glutamate 169–asparagine 171.

As to quaternary structure, monomer and homodimer. Interacts with signaling adapter Fc receptor gamma chain/FCER1G to form a functional complex; the interaction is direct. Alternatively, acts as a bridge for interaction between CLEC4D and FCER1G. A heterodimer of CLEC4E and CLEC4D associates with FCER1G to form a functional complex. Interacts with SAP130 nuclear protein that is released from necrotic cells; the interaction is direct. In terms of tissue distribution, expressed in monocytes and macrophages.

It is found in the cell membrane. Its subcellular location is the cell projection. It localises to the phagocytic cup. Functionally, calcium-dependent lectin that acts as a pattern recognition receptor (PRR) of the innate immune system: recognizes damage-associated molecular patterns (DAMPs) of abnormal self and pathogen-associated molecular patterns (PAMPs) of bacteria and fungi. The PAMPs notably include mycobacterial trehalose 6,6'-dimycolate (TDM), a cell wall glycolipid with potent adjuvant immunomodulatory functions. Interacts with signaling adapter Fc receptor gamma chain/FCER1G to form a functional complex in myeloid cells. Binding of mycobacterial trehalose 6,6'-dimycolate (TDM) to this receptor complex leads to phosphorylation of the immunoreceptor tyrosine-based activation motif (ITAM) of FCER1G, triggering activation of SYK, CARD9 and NF-kappa-B, consequently driving maturation of antigen-presenting cells and shaping antigen-specific priming of T-cells toward effector T-helper 1 and T-helper 17 cell subtypes. Also recognizes alpha-mannose residues on pathogenic fungi of the genus Malassezia and mediates macrophage activation. Through recognition of DAMPs released upon nonhomeostatic cell death, enables immune sensing of damaged self and promotes inflammatory cell infiltration into the damaged tissue. The polypeptide is C-type lectin domain family 4 member E (Homo sapiens (Human)).